A 425-amino-acid polypeptide reads, in one-letter code: Putative TRAP transporter large permease protein HI_1029 (425 aa).

13 helical membrane-spanning segments follow: residues 3 to 23 (VIIF…VAFA), 24 to 44 (LLIC…QILA), 54 to 74 (FSLM…EGGL), 93 to 113 (LGFV…SAVA), 139 to 159 (LIGT…FIVF), 169 to 189 (KLFL…AILW), 217 to 237 (VWAL…IFTP), 241 to 261 (GVVA…ELPL), 275 to 295 (TAVV…ITVA), 312 to 332 (PTIL…VMDL), 334 to 354 (PTVL…GIDP), 355 to 375 (VYFG…PPVG), and 399 to 419 (YLGM…LILM).

The protein belongs to the TRAP transporter large permease family.

Its subcellular location is the cell inner membrane. The protein is Putative TRAP transporter large permease protein HI_1029 of Haemophilus influenzae (strain ATCC 51907 / DSM 11121 / KW20 / Rd).